The primary structure comprises 1347 residues: Spermatogenesis-associated protein 31A5 (1347 aa).

The chain crosses the membrane as a helical span at residues 23-43 (PWVLDIFLTLVFALGFFFLLL). 7 disordered regions span residues 55-87 (PSPS…GREC), 106-233 (GPHL…RDST), 373-397 (EQDT…GPQK), 628-657 (DESP…KEAQ), 900-955 (RGIP…REAV), 1084-1161 (VHEE…PSVS), and 1313-1335 (KAVS…SHHH). Residues 60 to 82 (GKRKCPVGRRRRPRGRMKNHSLR) show a composition bias toward basic residues. The span at 165–178 (LASTPSPGPMTTSV) shows a compositional bias: polar residues. The span at 198–211 (PEPPALFPHPPHTP) shows a compositional bias: pro residues. Polar residues-rich tracts occupy residues 631–651 (PGTS…STGE) and 927–948 (LTYS…SSKA). Basic and acidic residues-rich tracts occupy residues 1108–1127 (HKSE…RLEG) and 1137–1146 (RKTEDTHQDE).

It belongs to the SPATA31 family.

The protein localises to the membrane. May play a role in spermatogenesis. The protein is Spermatogenesis-associated protein 31A5 (SPATA31A5) of Homo sapiens (Human).